The following is a 534-amino-acid chain: MTVLCRLRHCHLSTPTLCRRFHDARVYKEDKRWPGWQVVVGIETHAQIKSRRKLFSGKITGTNPDEPPNKHVSPFDAAFPGTLPKLNSKCVDLAIRTALALKSDIQHRSSFDRKHYFYSDLPSGYQITQQYAPIALRGQLNIQMPNSSAVPVRIKQIQLEQDTAKSTLNPRKRISNIDLNRAGAGLMEIVSEPDLRSPEEAGMFVRTLQAVLRAIGASDGNMEQGSLRCDVNVSVNRVGRPPGTRCEIKNLNSVKFMMAAITHEIIRQRAILESASDLETCTVPQETRGFDENTFETYRLRSKEDAPDYRYMPDPNLGVLVLSQDRVQAIRDSLPELPWETRHRLREMYALSERDIDVLLSVDSGREVTFDGEKDVDGSGAVAMTHELLGQLSARKETFTDNSLTSDHLGELIDLVQNGTITGTSGKYLLRHMLAKPSSLRPAQITQQLRLTSLSSFSSSGHSNPTSTTDQELTTLCQAAITALPNEVAAVRAGNKNVMNKIVGRVMRESRGRADAKGVKALVEELILGGGDKS.

The N-terminal 28 residues, 1-28 (MTVLCRLRHCHLSTPTLCRRFHDARVYK), are a transit peptide targeting the mitochondrion.

It belongs to the GatB/GatE family. GatB subfamily. Subunit of the heterotrimeric GatCAB amidotransferase (AdT) complex, composed of A, B and C subunits.

It localises to the mitochondrion. It catalyses the reaction L-glutamyl-tRNA(Gln) + L-glutamine + ATP + H2O = L-glutaminyl-tRNA(Gln) + L-glutamate + ADP + phosphate + H(+). In terms of biological role, allows the formation of correctly charged Gln-tRNA(Gln) through the transamidation of misacylated Glu-tRNA(Gln) in the mitochondria. The reaction takes place in the presence of glutamine and ATP through an activated gamma-phospho-Glu-tRNA(Gln). This chain is Glutamyl-tRNA(Gln) amidotransferase subunit B, mitochondrial, found in Laccaria bicolor (strain S238N-H82 / ATCC MYA-4686) (Bicoloured deceiver).